Consider the following 344-residue polypeptide: Arginine N-succinyltransferase (344 aa).

A succinyl-CoA-binding site is contributed by Leu-125. Residue His-229 is the Proton donor of the active site.

The protein belongs to the arginine N-succinyltransferase family.

It catalyses the reaction succinyl-CoA + L-arginine = N(2)-succinyl-L-arginine + CoA + H(+). It participates in amino-acid degradation; L-arginine degradation via AST pathway; L-glutamate and succinate from L-arginine: step 1/5. Functionally, catalyzes the transfer of succinyl-CoA to arginine to produce N(2)-succinylarginine. In Escherichia coli (strain 55989 / EAEC), this protein is Arginine N-succinyltransferase.